Here is a 518-residue protein sequence, read N- to C-terminus: MPTVVVMDVSLSMTRPVSVEGSEEYQRKHLAAHGLTMLFEHMATNYKLEFTALVVFSSLWELMVPFTRDYNTLQEALSNMDDYDKTCLESALVGVCNIVQQEWGGAIPCQVVLVTDGCLGIGRGSLRHSLATHNQRGESNRFPLPFPFPSKLYIMCMANLEELQSTDSLDCLERLIDLNNGEGQIFTIDGPLCLKNVQSMFGKLIDLAYTPFHAVLKCGHLTADVQVFPRPEPFVIDEEIDPIPKVINTDLEIVGFIDIADISSPPVLSRHLVLPIALNKEGDEVGTGITDDNEDENSANQIAGKIPNFCVLLHGSLKVEGMVAIVQLGPEWHGMLYSQADSKKKSNLMMSLFEPGPEPLPWLGKMVQLGPISDAKENPYGEDDNKSPFPLQPKNKRSYAQNVTVWIKPSGLQTDVQKILRNARKLPEKTQTFYKELNRLRKAALAFGFLDLLKGVADMLERECTLLPDTAHPDAAFQLTHAAQQLKLASTGTSEYAGYDHNITPLQTDFSGSSAERI.

Positions proline 2–leucine 204 constitute a VWFA domain. Residues serine 10, serine 12, and threonine 86 each coordinate Mg(2+). At lysine 418 the chain carries N6-acetyllysine.

The protein belongs to the Integrator subunit 14 family. As to quaternary structure, component of the Integrator complex, composed of core subunits INTS1, INTS2, INTS3, INTS4, INTS5, INTS6, INTS7, INTS8, INTS9/RC74, INTS10, INTS11/CPSF3L, INTS12, INTS13, INTS14 and INTS15. The core complex associates with protein phosphatase 2A subunits PPP2CA and PPP2R1A, to form the Integrator-PP2A (INTAC) complex. INTS14 is part of the tail subcomplex, composed of INTS10, INTS13, INTS14 and INTS15.

It localises to the nucleus. Component of the integrator complex, a multiprotein complex that terminates RNA polymerase II (Pol II) transcription in the promoter-proximal region of genes. The integrator complex provides a quality checkpoint during transcription elongation by driving premature transcription termination of transcripts that are unfavorably configured for transcriptional elongation: the complex terminates transcription by (1) catalyzing dephosphorylation of the C-terminal domain (CTD) of Pol II subunit POLR2A/RPB1 and SUPT5H/SPT5, (2) degrading the exiting nascent RNA transcript via endonuclease activity and (3) promoting the release of Pol II from bound DNA. The integrator complex is also involved in terminating the synthesis of non-coding Pol II transcripts, such as enhancer RNAs (eRNAs), small nuclear RNAs (snRNAs), telomerase RNAs and long non-coding RNAs (lncRNAs). Within the integrator complex, INTS14 is part of the integrator tail module that acts as a platform for the recruitment of transcription factors at promoters. The protein is Integrator complex subunit 14 of Bos taurus (Bovine).